Reading from the N-terminus, the 187-residue chain is MVSGSFDIGDLKRRMQGATQSLKHELGGLRTGRASSSMLDPVQVDAYGSHMPLNQVATISVPEPRLLSVQVWDKSMVKAVEKAIVDSNLGLSPATEGQVLRLRIPELNEERRKELVKVAHKYAEAAKVAVRHVRRDGLDTLKKLEKNHEISEDDEKRLANDVQKATDSVISEIDQLLAGKEKEILTV.

It belongs to the RRF family.

Its subcellular location is the cytoplasm. Its function is as follows. Responsible for the release of ribosomes from messenger RNA at the termination of protein biosynthesis. May increase the efficiency of translation by recycling ribosomes from one round of translation to another. The polypeptide is Ribosome-recycling factor (Nitrobacter winogradskyi (strain ATCC 25391 / DSM 10237 / CIP 104748 / NCIMB 11846 / Nb-255)).